A 368-amino-acid polypeptide reads, in one-letter code: tRNA 2-selenouridine synthase (368 aa).

Residues 15 to 138 (FLNQHPIMDV…LRQYLIGVIE (124 aa)) enclose the Rhodanese domain. Residue Cys-98 is the S-selanylcysteine intermediate of the active site.

Belongs to the SelU family. Monomer.

The catalysed reaction is 5-methylaminomethyl-2-thiouridine(34) in tRNA + selenophosphate + (2E)-geranyl diphosphate + H2O + H(+) = 5-methylaminomethyl-2-selenouridine(34) in tRNA + (2E)-thiogeraniol + phosphate + diphosphate. The enzyme catalyses 5-methylaminomethyl-2-thiouridine(34) in tRNA + (2E)-geranyl diphosphate = 5-methylaminomethyl-S-(2E)-geranyl-thiouridine(34) in tRNA + diphosphate. It carries out the reaction 5-methylaminomethyl-S-(2E)-geranyl-thiouridine(34) in tRNA + selenophosphate + H(+) = 5-methylaminomethyl-2-(Se-phospho)selenouridine(34) in tRNA + (2E)-thiogeraniol. It catalyses the reaction 5-methylaminomethyl-2-(Se-phospho)selenouridine(34) in tRNA + H2O = 5-methylaminomethyl-2-selenouridine(34) in tRNA + phosphate. Involved in the post-transcriptional modification of the uridine at the wobble position (U34) of tRNA(Lys), tRNA(Glu) and tRNA(Gln). Catalyzes the conversion of 2-thiouridine (S2U-RNA) to 2-selenouridine (Se2U-RNA). Acts in a two-step process involving geranylation of 2-thiouridine (S2U) to S-geranyl-2-thiouridine (geS2U) and subsequent selenation of the latter derivative to 2-selenouridine (Se2U) in the tRNA chain. The sequence is that of tRNA 2-selenouridine synthase from Shewanella baltica (strain OS223).